The following is a 331-amino-acid chain: Ketol-acid reductoisomerase (NADP(+)) (331 aa).

A KARI N-terminal Rossmann domain is found at 2 to 182; sequence AQLFYDTDAD…GGTRAGILET (181 aa). NADP(+) is bound by residues 25–28, Ser-51, Ser-53, and 83–86; these read YGSQ and DEFQ. His-108 is a catalytic residue. Gly-134 is a binding site for NADP(+). Positions 183–328 constitute a KARI C-terminal knotted domain; that stretch reads NFKEETETDL…KGLRSMFSWL (146 aa). Mg(2+)-binding residues include Asp-191, Glu-195, Glu-227, and Glu-231. Ser-252 provides a ligand contact to substrate.

Belongs to the ketol-acid reductoisomerase family. Mg(2+) serves as cofactor.

The catalysed reaction is (2R)-2,3-dihydroxy-3-methylbutanoate + NADP(+) = (2S)-2-acetolactate + NADPH + H(+). The enzyme catalyses (2R,3R)-2,3-dihydroxy-3-methylpentanoate + NADP(+) = (S)-2-ethyl-2-hydroxy-3-oxobutanoate + NADPH + H(+). It participates in amino-acid biosynthesis; L-isoleucine biosynthesis; L-isoleucine from 2-oxobutanoate: step 2/4. Its pathway is amino-acid biosynthesis; L-valine biosynthesis; L-valine from pyruvate: step 2/4. Involved in the biosynthesis of branched-chain amino acids (BCAA). Catalyzes an alkyl-migration followed by a ketol-acid reduction of (S)-2-acetolactate (S2AL) to yield (R)-2,3-dihydroxy-isovalerate. In the isomerase reaction, S2AL is rearranged via a Mg-dependent methyl migration to produce 3-hydroxy-3-methyl-2-ketobutyrate (HMKB). In the reductase reaction, this 2-ketoacid undergoes a metal-dependent reduction by NADPH to yield (R)-2,3-dihydroxy-isovalerate. In Synechococcus sp. (strain WH7803), this protein is Ketol-acid reductoisomerase (NADP(+)).